The sequence spans 163 residues: Phosphopantetheine adenylyltransferase (163 aa).

Ser9 serves as a coordination point for substrate. ATP contacts are provided by residues 9–10 (SF) and His17. Lys41, Thr73, and Arg87 together coordinate substrate. ATP is bound by residues 88–90 (GLR), Glu98, and 123–129 (YSFISSG).

This sequence belongs to the bacterial CoaD family. Homohexamer. Mg(2+) is required as a cofactor.

It is found in the cytoplasm. It catalyses the reaction (R)-4'-phosphopantetheine + ATP + H(+) = 3'-dephospho-CoA + diphosphate. The protein operates within cofactor biosynthesis; coenzyme A biosynthesis; CoA from (R)-pantothenate: step 4/5. Reversibly transfers an adenylyl group from ATP to 4'-phosphopantetheine, yielding dephospho-CoA (dPCoA) and pyrophosphate. The polypeptide is Phosphopantetheine adenylyltransferase (Desulforudis audaxviator (strain MP104C)).